We begin with the raw amino-acid sequence, 56 residues long: UPF0434 protein CbuK_1382 (56 aa).

It belongs to the UPF0434 family.

The polypeptide is UPF0434 protein CbuK_1382 (Coxiella burnetii (strain CbuK_Q154) (Coxiella burnetii (strain Q154))).